We begin with the raw amino-acid sequence, 555 residues long: Carboxylic ester hydrolase (555 aa).

The signal sequence occupies residues 1–19; the sequence is MELSVIALLLLGFVNFSWQ. Cys-86 and Cys-107 are disulfide-bonded. Residues Asn-120 and Asn-144 are each glycosylated (N-linked (GlcNAc...) asparagine). Ser-211 functions as the Acyl-ester intermediate in the catalytic mechanism. Cys-263 and Cys-274 form a disulfide bridge. Residue Glu-336 is the Charge relay system of the active site. 2 N-linked (GlcNAc...) asparagine glycosylation sites follow: Asn-369 and Asn-397. His-459 (charge relay system) is an active-site residue. Asn-473 and Asn-533 each carry an N-linked (GlcNAc...) asparagine glycan.

It belongs to the type-B carboxylesterase/lipase family. N-glycosylated. In terms of tissue distribution, expressed in several tissues, including epidermis (at protein level), fat body (at protein level), gut (at protein level), muscle (at protein level), and venom gland (at protein level).

It localises to the secreted. The enzyme catalyses a carboxylic ester + H2O = an alcohol + a carboxylate + H(+). Its function is as follows. Lipolytic agent that may be involved in distributing the venom via degradation of blood triglycerides. The recombinant protein degrades triglycerides and exhibits high lipolytic activity toward long-chain triglycerides (tested on tributyrin, trioctanoin and triolein). Does not affect mammalian cells. The sequence is that of Carboxylic ester hydrolase (vCaE) from Bombus ignitus (Bumblebee).